A 109-amino-acid polypeptide reads, in one-letter code: MASLKKSLFLVLFLGLLSLSICEEQKRENEEDAEDENHEEESEEKRGLLDFAKHVIGIASKLGKRSEEKRFWPFMGKRSEEKRFWPFMGKRSEEKRFFRVLAKLGKLAK.

Residues 1-22 form the signal peptide; sequence MASLKKSLFLVLFLGLLSLSIC. Residues 23–46 constitute a propeptide that is removed on maturation; the sequence is EEQKRENEEDAEDENHEEESEEKR. The tract at residues 27-46 is disordered; it reads RENEEDAEDENHEEESEEKR. Positions 30–42 are enriched in acidic residues; it reads EEDAEDENHEEES. L62 carries the leucine amide modification. Residues 66–70 constitute a propeptide that is removed on maturation; the sequence is SEEKR. M75 carries the methionine amide modification. The propeptide occupies 79 to 83; it reads SEEKR. Methionine amide is present on M88. Propeptides lie at residues 92–96 and A108; that span reads SEEKR.

It belongs to the frog skin active peptide (FSAP) family. Brevinin subfamily. As to expression, expressed by the skin glands.

It localises to the secreted. Fallaxidin-2.1 shows no antibacterial activity against Gram-positive or Gram-negative bacteria. Does not inhibit the formation of NO by neuronal nitric oxide synthase. Has no effect on splenocyte proliferation or smooth muscle contraction. Functionally, fallaxidin-3.2 shows antibacterial activity against the Gram-positive bacteria E.faecalis (MIC=100 uM) and L.lactis (MIC=500 uM). No antibacterial activity against the Gram-positive bacteria B.cereus, L.innocua, M.luteus, S.epidermidis, S.uberis and S.aureus, or the Gram-negative bacteria E.cloacae and E.coli. The chain is Preprofallaxidin-8 from Litoria fallax (Eastern dwarf tree frog).